The chain runs to 815 residues: Translation initiation factor IF-2 (815 aa).

The 168-residue stretch at 315–482 folds into the tr-type G domain; it reads ARPPVVTIMG…AISLTAEVLE (168 aa). A G1 region spans residues 324-331; sequence GHVDHGKT. Residue 324–331 participates in GTP binding; that stretch reads GHVDHGKT. A G2 region spans residues 349 to 353; the sequence is GITQH. The tract at residues 370 to 373 is G3; the sequence is DTPG. Residues 370 to 374 and 424 to 427 contribute to the GTP site; these read DTPGH and NKID. Residues 424–427 are G4; it reads NKID. The G5 stretch occupies residues 460-462; that stretch reads SAY.

This sequence belongs to the TRAFAC class translation factor GTPase superfamily. Classic translation factor GTPase family. IF-2 subfamily.

It localises to the cytoplasm. Its function is as follows. One of the essential components for the initiation of protein synthesis. Protects formylmethionyl-tRNA from spontaneous hydrolysis and promotes its binding to the 30S ribosomal subunits. Also involved in the hydrolysis of GTP during the formation of the 70S ribosomal complex. The sequence is that of Translation initiation factor IF-2 from Ruthia magnifica subsp. Calyptogena magnifica.